The chain runs to 177 residues: Endoribonuclease YbeY (177 aa).

His-142, His-146, and His-152 together coordinate Zn(2+).

Belongs to the endoribonuclease YbeY family. Zn(2+) serves as cofactor.

It is found in the cytoplasm. In terms of biological role, single strand-specific metallo-endoribonuclease involved in late-stage 70S ribosome quality control and in maturation of the 3' terminus of the 16S rRNA. The polypeptide is Endoribonuclease YbeY (Synechococcus sp. (strain CC9311)).